Reading from the N-terminus, the 420-residue chain is D-tagatose-1,6-bisphosphate aldolase subunit GatZ (420 aa).

Belongs to the GatZ/KbaZ family. GatZ subfamily. As to quaternary structure, forms a complex with GatY.

Its pathway is carbohydrate metabolism; D-tagatose 6-phosphate degradation; D-glyceraldehyde 3-phosphate and glycerone phosphate from D-tagatose 6-phosphate: step 2/2. Functionally, component of the tagatose-1,6-bisphosphate aldolase GatYZ that is required for full activity and stability of the Y subunit. Could have a chaperone-like function for the proper and stable folding of GatY. When expressed alone, GatZ does not show any aldolase activity. Is involved in the catabolism of galactitol. The protein is D-tagatose-1,6-bisphosphate aldolase subunit GatZ of Escherichia coli O6:H1 (strain CFT073 / ATCC 700928 / UPEC).